Consider the following 118-residue polypeptide: MICOS complex subunit MIC13 (118 aa).

At M1–S7 the chain is on the mitochondrial matrix side. Residues L8–Y26 traverse the membrane as a helical segment. Residues D27–K118 lie on the Mitochondrial intermembrane side of the membrane.

The protein belongs to the MICOS complex subunit Mic13 family. As to quaternary structure, component of the mitochondrial contact site and cristae organizing system (MICOS) complex, composed of at least MICOS10/MIC10, CHCHD3/MIC19, CHCHD6/MIC25, APOO/MIC26, MICOS13/MIC13, APOOL/MIC27 and IMMT/MIC60. The MICOS complex associates with mitochondrial outer membrane proteins SAMM50, MTX1 and MTX2 (together described as components of the mitochondrial outer membrane sorting assembly machinery (SAM) complex) and DNAJC11, mitochondrial inner membrane protein TMEM11 and with HSPA9. The MICOS and SAM complexes together with DNAJC11 are part of a large protein complex spanning both membranes termed the mitochondrial intermembrane space bridging (MIB) complex.

The protein resides in the mitochondrion inner membrane. In terms of biological role, component of the MICOS complex, a large protein complex of the mitochondrial inner membrane that plays crucial roles in the maintenance of crista junctions, inner membrane architecture, and formation of contact sites to the outer membrane. Constituent of mature MICOS complex, it is required for the formation of cristae junction (CJ) and maintenance of cristae morphology. Required for the incorporation of MICOS10/MIC10 into the MICOS complex. The polypeptide is MICOS complex subunit MIC13 (Homo sapiens (Human)).